The chain runs to 683 residues: Probable serine/threonine-protein kinase HAL5-like (683 aa).

Disordered regions lie at residues 1–90 (MPQQ…VSDE) and 157–200 (YPQN…SKKA). Over residues 36–48 (PSSAATSDSSEMS) the composition is skewed to low complexity. Positions 50-60 (AQGGRGNGLLG) are enriched in gly residues. Over residues 69 to 85 (SPKSEAQFTQRNKSAES) the composition is skewed to polar residues. Positions 364-670 (GKCIGMIGQG…IPKLLDTPWM (307 aa)) constitute a Protein kinase domain. Residues 370-378 (IGQGAYGTV) and Lys411 contribute to the ATP site. The Proton acceptor role is filled by Asp521.

The protein belongs to the protein kinase superfamily. CAMK Ser/Thr protein kinase family. NPR/HAL subfamily. HAL5 sub-subfamily.

The enzyme catalyses L-seryl-[protein] + ATP = O-phospho-L-seryl-[protein] + ADP + H(+). It catalyses the reaction L-threonyl-[protein] + ATP = O-phospho-L-threonyl-[protein] + ADP + H(+). The polypeptide is Probable serine/threonine-protein kinase HAL5-like (Eremothecium gossypii (strain ATCC 10895 / CBS 109.51 / FGSC 9923 / NRRL Y-1056) (Yeast)).